Reading from the N-terminus, the 528-residue chain is O-methylsterigmatocystin oxidoreductase (528 aa).

Cys-440 is a heme binding site.

The protein belongs to the cytochrome P450 family. The cofactor is heme.

The catalysed reaction is 8-O-methylsterigmatocystin + 2 reduced [NADPH--hemoprotein reductase] + 2 O2 = aflatoxin B1 + methanol + 2 oxidized [NADPH--hemoprotein reductase] + CO2 + H2O + 2 H(+). It catalyses the reaction 8-O-methyldihydrosterigmatocystin + 2 reduced [NADPH--hemoprotein reductase] + 2 O2 = aflatoxin B2 + methanol + 2 oxidized [NADPH--hemoprotein reductase] + CO2 + H2O + 2 H(+). Its pathway is mycotoxin biosynthesis; aflatoxin biosynthesis. Its function is as follows. Converts O-methylsterigmatocystin (OMST) to aflatoxin B1 and converts dihydro-O-methylsterigmatocystin (DHOMST) to aflatoxin B2 in the aflatoxin biosynthesis pathway. The chain is O-methylsterigmatocystin oxidoreductase (ordA) from Aspergillus flavus.